The primary structure comprises 448 residues: Tubulin beta chain (448 aa).

GTP contacts are provided by Q11, E69, S138, G142, T143, G144, N204, and N226. E69 is a binding site for Mg(2+).

It belongs to the tubulin family. As to quaternary structure, dimer of alpha and beta chains. A typical microtubule is a hollow water-filled tube with an outer diameter of 25 nm and an inner diameter of 15 nM. Alpha-beta heterodimers associate head-to-tail to form protofilaments running lengthwise along the microtubule wall with the beta-tubulin subunit facing the microtubule plus end conferring a structural polarity. Microtubules usually have 13 protofilaments but different protofilament numbers can be found in some organisms and specialized cells. It depends on Mg(2+) as a cofactor.

The protein localises to the cytoplasm. It is found in the cytoskeleton. Its function is as follows. Tubulin is the major constituent of microtubules, a cylinder consisting of laterally associated linear protofilaments composed of alpha- and beta-tubulin heterodimers. Microtubules grow by the addition of GTP-tubulin dimers to the microtubule end, where a stabilizing cap forms. Below the cap, tubulin dimers are in GDP-bound state, owing to GTPase activity of alpha-tubulin. This Melampsora lini (Rust fungus) protein is Tubulin beta chain (TUB1).